Consider the following 306-residue polypeptide: Agmatinase (306 aa).

Mn(2+)-binding residues include His126, Asp149, His151, Asp153, Asp230, and Asp232.

Belongs to the arginase family. Agmatinase subfamily. The cofactor is Mn(2+).

It carries out the reaction agmatine + H2O = urea + putrescine. The protein operates within amine and polyamine biosynthesis; putrescine biosynthesis via agmatine pathway; putrescine from agmatine: step 1/1. In terms of biological role, catalyzes the formation of putrescine from agmatine. The sequence is that of Agmatinase from Klebsiella pneumoniae (strain 342).